Here is a 329-residue protein sequence, read N- to C-terminus: Beta-ketoacyl-[acyl-carrier-protein] synthase III (329 aa).

Residues cysteine 123 and histidine 256 contribute to the active site. Positions 257-261 (QANIR) are ACP-binding. The active site involves asparagine 286.

Belongs to the thiolase-like superfamily. FabH family. In terms of assembly, homodimer.

The protein localises to the cytoplasm. It carries out the reaction malonyl-[ACP] + acetyl-CoA + H(+) = 3-oxobutanoyl-[ACP] + CO2 + CoA. The protein operates within lipid metabolism; fatty acid biosynthesis. Its function is as follows. Catalyzes the condensation reaction of fatty acid synthesis by the addition to an acyl acceptor of two carbons from malonyl-ACP. Catalyzes the first condensation reaction which initiates fatty acid synthesis and may therefore play a role in governing the total rate of fatty acid production. Possesses both acetoacetyl-ACP synthase and acetyl transacylase activities. Its substrate specificity determines the biosynthesis of branched-chain and/or straight-chain of fatty acids. The polypeptide is Beta-ketoacyl-[acyl-carrier-protein] synthase III (Paraburkholderia phymatum (strain DSM 17167 / CIP 108236 / LMG 21445 / STM815) (Burkholderia phymatum)).